The primary structure comprises 208 residues: AN1-type zinc finger protein 6 (208 aa).

An A20-type zinc finger spans residues 8–42 (SQVPMLCSTGCGFYGNPRTNGMCSVCYKEHLQRQN). Zn(2+) contacts are provided by Cys-14, Cys-18, Cys-30, and Cys-33. The span at 41–68 (QNSSNGRISPPATSVSSLSESLPVQCTD) shows a compositional bias: polar residues. The tract at residues 41-140 (QNSSNGRISP…PSEEQSKSLE (100 aa)) is disordered. A Phosphoserine modification is found at Ser-49. Over residues 80 to 94 (STSSSMQPSPVSNQS) the composition is skewed to low complexity. Polar residues-rich tracts occupy residues 95–110 (LLSE…STSV) and 120–133 (VQAS…QPSE). The AN1-type zinc-finger motif lies at 143-189 (KQKKNRCFMCRKKVGLTGFECRCGNVYCGVHRYSDVHNCSYNYKADA). Residues Cys-149, Cys-152, Cys-163, Cys-165, Cys-170, His-173, His-179, and Cys-181 each coordinate Zn(2+). Lys-204 is modified (N6-acetyllysine).

Interacts with PKN1. Interacts with TRAF2. Interacts with mono- and polyubiquitin. Interacts with PEX6. Interacts with PEX5 (Cys-linked ubiquitinated). Widely expressed with high level in heart, skeletal muscle, liver, kidney and placenta.

It is found in the cytoplasm. Involved in regulation of TNF-alpha induced NF-kappa-B activation and apoptosis. Involved in modulation of 'Lys-48'-linked polyubiquitination status of TRAF2 and decreases association of TRAF2 with RIPK1. Required for PTS1 target sequence-dependent protein import into peroxisomes and PEX5 stability; may cooperate with PEX6. In vitro involved in PEX5 export from the cytosol to peroxisomes. The sequence is that of AN1-type zinc finger protein 6 (ZFAND6) from Homo sapiens (Human).